Reading from the N-terminus, the 1405-residue chain is DNA-directed RNA polymerase III subunit rpc1 (1405 aa).

Residues C66, C69, C76, H79, C106, C109, and C153 each contribute to the Zn(2+) site. 3 residues coordinate Mg(2+): D493, D495, and D497. Residues 838 to 850 form a bridging helix region; the sequence is PTEFLFHAISGRE.

Belongs to the RNA polymerase beta' chain family. Component of the RNA polymerase III (Pol III) complex consisting of 17 subunits.

Its subcellular location is the nucleus. The enzyme catalyses RNA(n) + a ribonucleoside 5'-triphosphate = RNA(n+1) + diphosphate. Its function is as follows. DNA-dependent RNA polymerase catalyzes the transcription of DNA into RNA using the four ribonucleoside triphosphates as substrates. Largest and catalytic core component of RNA polymerase III which synthesizes small RNAs, such as 5S rRNA and tRNAs. Forms the polymerase active center together with the second largest subunit. A single-stranded DNA template strand of the promoter is positioned within the central active site cleft of Pol III. A bridging helix emanates from RPC1 and crosses the cleft near the catalytic site and is thought to promote translocation of Pol III by acting as a ratchet that moves the RNA-DNA hybrid through the active site by switching from straight to bent conformations at each step of nucleotide addition. This chain is DNA-directed RNA polymerase III subunit rpc1 (rpc1), found in Schizosaccharomyces pombe (strain 972 / ATCC 24843) (Fission yeast).